The following is a 1213-amino-acid chain: A disintegrin and metalloproteinase with thrombospondin motifs 19 (1213 aa).

The first 27 residues, 1–27 (MGKNREMRLTHICCCCLLYQLGFLSNG), serve as a signal peptide directing secretion. Residues 28–322 (IVSELQFAPD…KIAESGRGKR (295 aa)) constitute a propeptide that is removed on maturation. 2 disordered regions span residues 49 to 161 (WRRE…PPPA) and 192 to 215 (FLAPRFAVEQRPNPGPGPTGAASA). Residues 52–71 (EPVDPAGGSGGSADPGWVRG) show a composition bias toward gly residues. A compositionally biased stretch (acidic residues) spans 110–119 (RPPPPSEGEE). The span at 120-139 (DEELESQELPRGSSGAAALS) shows a compositional bias: low complexity. The span at 140 to 155 (PGAPASWQPPPPPQPP) shows a compositional bias: pro residues. Asn266 carries N-linked (GlcNAc...) asparagine glycosylation. The Cysteine switch motif lies at 298-305 (HYCGIISD). Cys300 serves as a coordination point for Zn(2+). In terms of domain architecture, Peptidase M12B spans 331–551 (YNIETVVVAD…KASNCLLQTN (221 aa)). Disulfide bonds link Cys407-Cys472, Cys447-Cys454, Cys466-Cys546, Cys505-Cys530, Cys575-Cys599, Cys586-Cys607, Cys594-Cys626, Cys620-Cys631, Cys651-Cys686, Cys655-Cys691, and Cys666-Cys676. His488 contacts Zn(2+). Glu489 is a catalytic residue. Zn(2+) contacts are provided by His492 and His498. The Disintegrin domain occupies 552–639 (PQSVNSVMVP…ECTSRTSAPE (88 aa)). One can recognise a TSP type-1 1 domain in the interval 640-692 (HLAGEWSLWSPCSRTCSAGISSRERKCPGLDSEARDCNGPRKQYRICENPPCP). The tract at residues 797–920 (IIKGDFNHTR…PENQSSKAPE (124 aa)) is spacer. 4 N-linked (GlcNAc...) asparagine glycosylation sites follow: Asn803, Asn913, Asn955, and Asn1015. 4 consecutive TSP type-1 domains span residues 921 to 981 (PLFM…NEQP), 982 to 1043 (CQTR…QDCM), 1045 to 1089 (VWEA…EDCE), and 1093 to 1150 (KCYV…QPCN). 3 cysteine pairs are disulfide-bonded: Cys994–Cys1037, Cys998–Cys1042, and Cys1009–Cys1026. Residues 1166–1205 (LTFKCLGDQWPVYCRVIREKNLCQDMRWYQRCCETCRDFY) form the PLAC domain.

Requires Zn(2+) as cofactor. Post-translationally, the precursor is cleaved by a furin endopeptidase. Glycosylated. Can be O-fucosylated by POFUT2 on a serine or a threonine residue found within the consensus sequence C1-X(2)-(S/T)-C2-G of the TSP type-1 repeat domains where C1 and C2 are the first and second cysteine residue of the repeat, respectively. Fucosylated repeats can then be further glycosylated by the addition of a beta-1,3-glucose residue by the glucosyltransferase, B3GALTL. Fucosylation mediates the efficient secretion of ADAMTS family members. Can also be C-glycosylated with one or two mannose molecules on tryptophan residues within the consensus sequence W-X-X-W of the TPRs, and N-glycosylated. These other glycosylations can also facilitate secretion. In terms of tissue distribution, expressed in fetal lung, but not in any adult tissues examined. Expression was detected in an osteosarcoma cDNA library.

It localises to the secreted. The protein localises to the extracellular space. The protein resides in the extracellular matrix. This is A disintegrin and metalloproteinase with thrombospondin motifs 19 (ADAMTS19) from Homo sapiens (Human).